The primary structure comprises 566 residues: KsdD-like steroid dehydrogenase Rv0785 (566 aa).

Residue 23–54 participates in FAD binding; the sequence is DAIVVGAGLAGLVAACELADRGLRVLILDQEN.

This sequence belongs to the FAD-dependent oxidoreductase 2 family. FAD serves as cofactor.

The protein operates within lipid metabolism; steroid biosynthesis. Functionally, able to catalyze the elimination of the C-1 and C-2 hydrogen atoms of the A-ring from the polycyclic ring structure of 3-ketosteroids. The protein is KsdD-like steroid dehydrogenase Rv0785 of Mycobacterium tuberculosis (strain ATCC 25618 / H37Rv).